A 624-amino-acid chain; its full sequence is Cell pattern formation-associated protein ust1 (624 aa).

Disordered stretches follow at residues 1-24 (MSTASPLHHGHGNGSYANSPAPTG) and 43-99 (RSGS…GHSS). A compositionally biased stretch (low complexity) spans 43 to 62 (RSGSVPASASGSAPGSASGS). Basic residues predominate over residues 70-85 (QHHTGHHHYSAHHTHS). In terms of domain architecture, HTH APSES-type spans 233 to 339 (RVTTTLWEDE…PNIQSFLYHP (107 aa)). Positions 267–288 (GTKLLNVCGMSRGKRDGILKNE) form a DNA-binding region, H-T-H motif. A compositionally biased stretch (low complexity) spans 352–362 (AQERQAQRQRA). 3 disordered regions span residues 352–456 (AQER…QQQQ), 474–504 (QQAYPMTAAQQLARPSVGDRRQSAPISLNNS), and 538–624 (SWND…IHHE). Polar residues predominate over residues 369–391 (PGANGTSQAPPLMRANTTPSNGD). Positions 392-426 (TSTFSSGLSSLGSWTGSHDQGHASAPTTAQPSPSS) are enriched in low complexity. The span at 427–451 (MHNGATQMHMSLSNHGTASPTYAQS) shows a compositional bias: polar residues. Positions 571-587 (LDGDDLHSPDSSDDRLA) are enriched in basic and acidic residues. Over residues 615 to 624 (VGNGSGIHHE) the composition is skewed to gly residues.

This sequence belongs to the EFG1/PHD1/stuA family. Phosphorylated but is not a target of cAMP signaling.

It is found in the nucleus. Transcription factor that regulates asexual reproduction. Binds the StuA-response elements (StRE) with the consensus sequence 5'-(A/T)CGCG(T/A)N(A/C)-3' at the promoters of target genes. Regulates dimorphism, virulence, and the sporulation program. Required for mating, gall induction, and sporogenesis in maize tissue. Regulates expression of the filament-down-regulated gene UM00205 and the teliospore-specific gene ssp1. This Mycosarcoma maydis (Corn smut fungus) protein is Cell pattern formation-associated protein ust1 (ust1).